The following is a 458-amino-acid chain: UDP-N-acetylmuramate--L-alanine ligase (458 aa).

118–124 (GTHGKTT) is a binding site for ATP.

This sequence belongs to the MurCDEF family.

The protein localises to the cytoplasm. The enzyme catalyses UDP-N-acetyl-alpha-D-muramate + L-alanine + ATP = UDP-N-acetyl-alpha-D-muramoyl-L-alanine + ADP + phosphate + H(+). It participates in cell wall biogenesis; peptidoglycan biosynthesis. Cell wall formation. This Clostridium botulinum (strain Loch Maree / Type A3) protein is UDP-N-acetylmuramate--L-alanine ligase.